The primary structure comprises 354 residues: Histone-lysine N-methyltransferase SUVR3 (354 aa).

The Pre-SET domain occupies 143–188; the sequence is SGCECERCEEGYCKCLAFAGMEEIANECGSGCGCGSDCSNRVTQKG. Zn(2+) is bound by residues Cys145, Cys147, Cys150, Cys155, Cys157, Cys170, Cys174, Cys176, and Cys180. The SET domain maps to 191–323; the sequence is VSLKIVRDEK…AEEELSFSYG (133 aa). Residues 201–203 and 281–282 each bind S-adenosyl-L-methionine; these read KGW and NH. Residue Cys284 coordinates Zn(2+). Tyr322 is an S-adenosyl-L-methionine binding site. The 17-residue stretch at 334–350 folds into the Post-SET domain; that stretch reads DKLNCSCGSSCCLGTLP. Zn(2+) contacts are provided by Cys338, Cys340, and Cys345.

The protein belongs to the class V-like SAM-binding methyltransferase superfamily.

It is found in the nucleus. Its subcellular location is the chromosome. It catalyses the reaction L-lysyl-[histone] + S-adenosyl-L-methionine = N(6)-methyl-L-lysyl-[histone] + S-adenosyl-L-homocysteine + H(+). Functionally, histone methyltransferase. This is Histone-lysine N-methyltransferase SUVR3 (SUVR3) from Arabidopsis thaliana (Mouse-ear cress).